The following is a 306-amino-acid chain: Agmatinase (306 aa).

The Mn(2+) site is built by His-126, Asp-149, His-151, Asp-153, Asp-230, and Asp-232.

This sequence belongs to the arginase family. Agmatinase subfamily. The cofactor is Mn(2+).

It catalyses the reaction agmatine + H2O = urea + putrescine. The protein operates within amine and polyamine biosynthesis; putrescine biosynthesis via agmatine pathway; putrescine from agmatine: step 1/1. Catalyzes the formation of putrescine from agmatine. This is Agmatinase from Escherichia coli (strain SE11).